The primary structure comprises 364 residues: MITTEKKKKNKFLPDFEKQSIYSLRYDEMQEWLVEHGQQKFRAKQIFEWLYQKRVDSIDDMTNLSKDLRQVLKDNFAMTTLTTVVKQESKDGTIKFLFELQDGYTIETVLMRHDYGNSVCVTTQVGCRIGCTFCASTLGGLKRNLEAGEIVSQVLTVQKALDATDERVSQIVIMGIGEPFENYDEMMDFLRIVNDDNSLNIGARHITVSTSGIIPRIYDFAEEDIQINFAVSLHAAKDEIRSKLMPINRAYHVDKLMEAIKYYQEKTNRRVTFEYGLFGGVNDQLEHARDLAHLIKDLNCHVNLIPVNHVPERNYVKTPKDDIFKFEKELKRLGINATIRREQGSDIDAACGQLRAKERQVETR.

The Proton acceptor role is filled by E107. One can recognise a Radical SAM core domain in the interval 113–346 (HDYGNSVCVT…ATIRREQGSD (234 aa)). An intrachain disulfide couples C120 to C351. [4Fe-4S] cluster is bound by residues C127, C131, and C134. S-adenosyl-L-methionine-binding positions include 177–178 (GE), S209, 232–234 (SLH), and N308. C351 serves as the catalytic S-methylcysteine intermediate.

Belongs to the radical SAM superfamily. RlmN family. [4Fe-4S] cluster serves as cofactor.

The protein resides in the cytoplasm. It catalyses the reaction adenosine(2503) in 23S rRNA + 2 reduced [2Fe-2S]-[ferredoxin] + 2 S-adenosyl-L-methionine = 2-methyladenosine(2503) in 23S rRNA + 5'-deoxyadenosine + L-methionine + 2 oxidized [2Fe-2S]-[ferredoxin] + S-adenosyl-L-homocysteine. It carries out the reaction adenosine(37) in tRNA + 2 reduced [2Fe-2S]-[ferredoxin] + 2 S-adenosyl-L-methionine = 2-methyladenosine(37) in tRNA + 5'-deoxyadenosine + L-methionine + 2 oxidized [2Fe-2S]-[ferredoxin] + S-adenosyl-L-homocysteine. Its function is as follows. Specifically methylates position 2 of adenine 2503 in 23S rRNA and position 2 of adenine 37 in tRNAs. Confers resistance to some classes of antibiotics. This is Probable dual-specificity RNA methyltransferase RlmN from Staphylococcus haemolyticus (strain JCSC1435).